The following is a 413-amino-acid chain: Serine hydroxymethyltransferase (413 aa).

(6S)-5,6,7,8-tetrahydrofolate-binding positions include Leu119 and Gly123–Leu125. Position 228 is an N6-(pyridoxal phosphate)lysine (Lys228). Glu243 contacts (6S)-5,6,7,8-tetrahydrofolate.

Belongs to the SHMT family. As to quaternary structure, homodimer. Requires pyridoxal 5'-phosphate as cofactor.

It localises to the cytoplasm. The catalysed reaction is (6R)-5,10-methylene-5,6,7,8-tetrahydrofolate + glycine + H2O = (6S)-5,6,7,8-tetrahydrofolate + L-serine. It functions in the pathway one-carbon metabolism; tetrahydrofolate interconversion. The protein operates within amino-acid biosynthesis; glycine biosynthesis; glycine from L-serine: step 1/1. Functionally, catalyzes the reversible interconversion of serine and glycine with tetrahydrofolate (THF) serving as the one-carbon carrier. This reaction serves as the major source of one-carbon groups required for the biosynthesis of purines, thymidylate, methionine, and other important biomolecules. Also exhibits THF-independent aldolase activity toward beta-hydroxyamino acids, producing glycine and aldehydes, via a retro-aldol mechanism. The protein is Serine hydroxymethyltransferase of Desulforamulus reducens (strain ATCC BAA-1160 / DSM 100696 / MI-1) (Desulfotomaculum reducens).